The sequence spans 263 residues: Undecaprenyl-diphosphatase 2 (263 aa).

Transmembrane regions (helical) follow at residues 17-37 (TEFL…LIGF), 42-62 (AKVF…VIFW), 83-103 (LHII…HSAI), 106-126 (VLFG…LMIV), 142-162 (ITYK…WPGF), 183-203 (AEYT…LDLI), 216-236 (LFAT…VSFL), and 242-262 (VKLT…YFFI).

It belongs to the UppP family.

It is found in the cell membrane. The catalysed reaction is di-trans,octa-cis-undecaprenyl diphosphate + H2O = di-trans,octa-cis-undecaprenyl phosphate + phosphate + H(+). Its function is as follows. Catalyzes the dephosphorylation of undecaprenyl diphosphate (UPP). Confers resistance to bacitracin. In Bacillus anthracis, this protein is Undecaprenyl-diphosphatase 2.